Reading from the N-terminus, the 386-residue chain is Formate-dependent phosphoribosylglycinamide formyltransferase (386 aa).

N(1)-(5-phospho-beta-D-ribosyl)glycinamide contacts are provided by residues 15 to 16 (EL) and E75. ATP-binding positions include R107, K148, 153 to 158 (SSGKGQ), 188 to 191 (EQFI), and E196. Residues 112 to 301 (ALAAQQLNLQ…EFELHLRAIV (190 aa)) enclose the ATP-grasp domain. 2 residues coordinate Mg(2+): E260 and E272. N(1)-(5-phospho-beta-D-ribosyl)glycinamide is bound by residues D279, K349, and 356–357 (RR).

This sequence belongs to the PurK/PurT family. In terms of assembly, homodimer.

The enzyme catalyses N(1)-(5-phospho-beta-D-ribosyl)glycinamide + formate + ATP = N(2)-formyl-N(1)-(5-phospho-beta-D-ribosyl)glycinamide + ADP + phosphate + H(+). The protein operates within purine metabolism; IMP biosynthesis via de novo pathway; N(2)-formyl-N(1)-(5-phospho-D-ribosyl)glycinamide from N(1)-(5-phospho-D-ribosyl)glycinamide (formate route): step 1/1. Involved in the de novo purine biosynthesis. Catalyzes the transfer of formate to 5-phospho-ribosyl-glycinamide (GAR), producing 5-phospho-ribosyl-N-formylglycinamide (FGAR). Formate is provided by PurU via hydrolysis of 10-formyl-tetrahydrofolate. The sequence is that of Formate-dependent phosphoribosylglycinamide formyltransferase from Francisella tularensis subsp. tularensis (strain SCHU S4 / Schu 4).